The following is a 507-amino-acid chain: Probable cytosol aminopeptidase (507 aa).

Mn(2+)-binding residues include K254 and D259. The active site involves K266. Residues D277, D336, and E338 each contribute to the Mn(2+) site. R340 is a catalytic residue. Residues 486-507 (PRKAQPKARSAKRSKPVSRTRA) are disordered. A compositionally biased stretch (basic residues) spans 489–507 (AQPKARSAKRSKPVSRTRA).

This sequence belongs to the peptidase M17 family. It depends on Mn(2+) as a cofactor.

The protein resides in the cytoplasm. It catalyses the reaction Release of an N-terminal amino acid, Xaa-|-Yaa-, in which Xaa is preferably Leu, but may be other amino acids including Pro although not Arg or Lys, and Yaa may be Pro. Amino acid amides and methyl esters are also readily hydrolyzed, but rates on arylamides are exceedingly low.. It carries out the reaction Release of an N-terminal amino acid, preferentially leucine, but not glutamic or aspartic acids.. Presumably involved in the processing and regular turnover of intracellular proteins. Catalyzes the removal of unsubstituted N-terminal amino acids from various peptides. The polypeptide is Probable cytosol aminopeptidase (Polaromonas sp. (strain JS666 / ATCC BAA-500)).